Consider the following 226-residue polypeptide: ATP synthase F(0) complex subunit a (226 aa).

Met1 is modified (N-formylmethionine). A run of 6 helical transmembrane segments spans residues Phe9–Leu29, Trp68–Leu88, Gln97–Phe117, Ile138–Val158, Ile164–Ile184, and Ala189–Ile209.

It belongs to the ATPase A chain family. In terms of assembly, component of the ATP synthase complex composed at least of ATP5F1A/subunit alpha, ATP5F1B/subunit beta, ATP5MC1/subunit c (homooctomer), MT-ATP6/subunit a, MT-ATP8/subunit 8, ATP5ME/subunit e, ATP5MF/subunit f, ATP5MG/subunit g, ATP5MK/subunit k, ATP5MJ/subunit j, ATP5F1C/subunit gamma, ATP5F1D/subunit delta, ATP5F1E/subunit epsilon, ATP5PF/subunit F6, ATP5PB/subunit b, ATP5PD/subunit d, ATP5PO/subunit OSCP. ATP synthase complex consists of a soluble F(1) head domain (subunits alpha(3) and beta(3)) - the catalytic core - and a membrane F(0) domain - the membrane proton channel (subunits c, a, 8, e, f, g, k and j). These two domains are linked by a central stalk (subunits gamma, delta, and epsilon) rotating inside the F1 region and a stationary peripheral stalk (subunits F6, b, d, and OSCP). Interacts with DNAJC30; interaction is direct.

Its subcellular location is the mitochondrion inner membrane. It carries out the reaction H(+)(in) = H(+)(out). Its function is as follows. Subunit a, of the mitochondrial membrane ATP synthase complex (F(1)F(0) ATP synthase or Complex V) that produces ATP from ADP in the presence of a proton gradient across the membrane which is generated by electron transport complexes of the respiratory chain. ATP synthase complex consist of a soluble F(1) head domain - the catalytic core - and a membrane F(1) domain - the membrane proton channel. These two domains are linked by a central stalk rotating inside the F(1) region and a stationary peripheral stalk. During catalysis, ATP synthesis in the catalytic domain of F(1) is coupled via a rotary mechanism of the central stalk subunits to proton translocation. With the subunit c (ATP5MC1), forms the proton-conducting channel in the F(0) domain, that contains two crucial half-channels (inlet and outlet) that facilitate proton movement from the mitochondrial intermembrane space (IMS) into the matrix. Protons are taken up via the inlet half-channel and released through the outlet half-channel, following a Grotthuss mechanism. This is ATP synthase F(0) complex subunit a from Bos taurus (Bovine).